A 125-amino-acid polypeptide reads, in one-letter code: SKP1-like protein 7 (125 aa).

The interaction with the F-box domain of F-box proteins stretch occupies residues 94–125; that stretch reads MNAAYDLHIKSLLALAYQTVADMVNDNKWAFE.

This sequence belongs to the SKP1 family. Part of a SCF (SKP1-cullin-F-box) protein ligase complex. As to expression, restricted to siliques.

The protein localises to the nucleus. It functions in the pathway protein modification; protein ubiquitination. Its function is as follows. Involved in ubiquitination and subsequent proteasomal degradation of target proteins. Together with CUL1, RBX1 and a F-box protein, it forms a SCF E3 ubiquitin ligase complex. The functional specificity of this complex depends on the type of F-box protein. In the SCF complex, it serves as an adapter that links the F-box protein to CUL1. This chain is SKP1-like protein 7 (ASK7), found in Arabidopsis thaliana (Mouse-ear cress).